The primary structure comprises 334 residues: D-alanine--D-alanine ligase (334 aa).

The ATP-grasp domain occupies 114–314 (KRIWRFEGLP…YEELCLRILA (201 aa)). 140–195 (LEDLGSPMIVKPSREGSTIGLTKVTSPGQCEQAYRLASRYDPEVLCEQFIEGEETT) is an ATP binding site. The Mg(2+) site is built by Asp-267, Glu-281, and Asn-283.

Belongs to the D-alanine--D-alanine ligase family. It depends on Mg(2+) as a cofactor. Requires Mn(2+) as cofactor.

The protein localises to the cytoplasm. It catalyses the reaction 2 D-alanine + ATP = D-alanyl-D-alanine + ADP + phosphate + H(+). The protein operates within cell wall biogenesis; peptidoglycan biosynthesis. Functionally, cell wall formation. The protein is D-alanine--D-alanine ligase of Paracidovorax citrulli (strain AAC00-1) (Acidovorax citrulli).